A 994-amino-acid chain; its full sequence is Transposase for transposon Tn2501 (994 aa).

The protein belongs to the transposase 7 family.

In terms of biological role, required for transposition of transposon Tn2501. The sequence is that of Transposase for transposon Tn2501 (tnpA) from Escherichia coli.